Consider the following 368-residue polypeptide: Ribosomal RNA large subunit methyltransferase M (368 aa).

Residues S192, 225–228, D244, D264, and D281 each bind S-adenosyl-L-methionine; that span reads APGG. The active-site Proton acceptor is K310.

It belongs to the class I-like SAM-binding methyltransferase superfamily. RNA methyltransferase RlmE family. RlmM subfamily. As to quaternary structure, monomer.

It is found in the cytoplasm. It catalyses the reaction cytidine(2498) in 23S rRNA + S-adenosyl-L-methionine = 2'-O-methylcytidine(2498) in 23S rRNA + S-adenosyl-L-homocysteine + H(+). Functionally, catalyzes the 2'-O-methylation at nucleotide C2498 in 23S rRNA. The polypeptide is Ribosomal RNA large subunit methyltransferase M (Colwellia psychrerythraea (strain 34H / ATCC BAA-681) (Vibrio psychroerythus)).